Consider the following 94-residue polypeptide: HssA/B-like protein 51 (94 aa).

Residues 1-25 form a disordered region; sequence MTLFSSISSISNPMTNSKSRISSFG.

It belongs to the hssA/B family.

In Dictyostelium discoideum (Social amoeba), this protein is HssA/B-like protein 51 (hssl51).